We begin with the raw amino-acid sequence, 699 residues long: DNA topoisomerase 1 (699 aa).

Composition is skewed to basic and acidic residues over residues 1 to 15 (MAKS…KNEL) and 22 to 35 (IELK…ESKG). The tract at residues 1–37 (MAKSKVVEKDKKNELDNQSADIELKGQSKNEESKGGK) is disordered. Residues 38–146 (KKVIIVESPA…NIITFTEITE (109 aa)) form the Toprim domain. Mg(2+)-binding residues include glutamate 44 and aspartate 115. Residues 160–583 (DMNKVNAQLA…SFLKEFNKDL (424 aa)) form the Topo IA-type catalytic domain. Residues 194–199 (SAGRVQ) are interaction with DNA. Tyrosine 324 acts as the O-(5'-phospho-DNA)-tyrosine intermediate in catalysis. The C4-type zinc-finger motif lies at 601-624 (CEDCSGNYKLKVGKYGLYLHCPNC). Residues 649–699 (QESQEENGEKNSVQSEESSANSGNRKFYRKRRTSGSKKSSTKSASSKAKKK) form a disordered region. Residues 661–672 (VQSEESSANSGN) show a composition bias toward polar residues. Residues 674–683 (KFYRKRRTSG) are compositionally biased toward basic residues. Over residues 684–699 (SKKSSTKSASSKAKKK) the composition is skewed to low complexity.

This sequence belongs to the type IA topoisomerase family. Monomer. It depends on Mg(2+) as a cofactor.

The catalysed reaction is ATP-independent breakage of single-stranded DNA, followed by passage and rejoining.. Its function is as follows. Releases the supercoiling and torsional tension of DNA, which is introduced during the DNA replication and transcription, by transiently cleaving and rejoining one strand of the DNA duplex. Introduces a single-strand break via transesterification at a target site in duplex DNA. The scissile phosphodiester is attacked by the catalytic tyrosine of the enzyme, resulting in the formation of a DNA-(5'-phosphotyrosyl)-enzyme intermediate and the expulsion of a 3'-OH DNA strand. The free DNA strand then undergoes passage around the unbroken strand, thus removing DNA supercoils. Finally, in the religation step, the DNA 3'-OH attacks the covalent intermediate to expel the active-site tyrosine and restore the DNA phosphodiester backbone. The sequence is that of DNA topoisomerase 1 from Fervidobacterium islandicum.